Consider the following 405-residue polypeptide: Tyrosine--tRNA ligase (405 aa).

Tyr35 contributes to the L-tyrosine binding site. Residues 40 to 49 (TTSSSLHIGH) carry the 'HIGH' region motif. 2 residues coordinate L-tyrosine: Tyr166 and Gln170. The short motif at 226-230 (KMGKS) is the 'KMSKS' region element. Lys229 serves as a coordination point for ATP. Residues 340–404 (ILLIDLMLDS…VGKKKFLRIV (65 aa)) enclose the S4 RNA-binding domain.

This sequence belongs to the class-I aminoacyl-tRNA synthetase family. TyrS type 1 subfamily. Homodimer.

It localises to the cytoplasm. The catalysed reaction is tRNA(Tyr) + L-tyrosine + ATP = L-tyrosyl-tRNA(Tyr) + AMP + diphosphate + H(+). Functionally, catalyzes the attachment of tyrosine to tRNA(Tyr) in a two-step reaction: tyrosine is first activated by ATP to form Tyr-AMP and then transferred to the acceptor end of tRNA(Tyr). This Borrelia garinii subsp. bavariensis (strain ATCC BAA-2496 / DSM 23469 / PBi) (Borreliella bavariensis) protein is Tyrosine--tRNA ligase.